The sequence spans 305 residues: UDP-3-O-acyl-N-acetylglucosamine deacetylase (305 aa).

Residues His-79, His-238, and Asp-242 each contribute to the Zn(2+) site. His-265 acts as the Proton donor in catalysis.

It belongs to the LpxC family. It depends on Zn(2+) as a cofactor.

It catalyses the reaction a UDP-3-O-[(3R)-3-hydroxyacyl]-N-acetyl-alpha-D-glucosamine + H2O = a UDP-3-O-[(3R)-3-hydroxyacyl]-alpha-D-glucosamine + acetate. It participates in glycolipid biosynthesis; lipid IV(A) biosynthesis; lipid IV(A) from (3R)-3-hydroxytetradecanoyl-[acyl-carrier-protein] and UDP-N-acetyl-alpha-D-glucosamine: step 2/6. Its function is as follows. Catalyzes the hydrolysis of UDP-3-O-myristoyl-N-acetylglucosamine to form UDP-3-O-myristoylglucosamine and acetate, the committed step in lipid A biosynthesis. The polypeptide is UDP-3-O-acyl-N-acetylglucosamine deacetylase (Escherichia fergusonii (strain ATCC 35469 / DSM 13698 / CCUG 18766 / IAM 14443 / JCM 21226 / LMG 7866 / NBRC 102419 / NCTC 12128 / CDC 0568-73)).